A 216-amino-acid polypeptide reads, in one-letter code: Probable GTP-binding protein EngB (216 aa).

Residues 27 to 201 enclose the EngB-type G domain; the sequence is EGIEVAFAGR…REKLDTWFSE (175 aa). GTP-binding positions include 35-42, 62-66, 80-83, 147-150, and 180-182; these read GRSNAGKS, GRTQL, DLPG, TKAD, and FSS. Residues Ser-42 and Thr-64 each contribute to the Mg(2+) site.

Belongs to the TRAFAC class TrmE-Era-EngA-EngB-Septin-like GTPase superfamily. EngB GTPase family. Requires Mg(2+) as cofactor.

In terms of biological role, necessary for normal cell division and for the maintenance of normal septation. The protein is Probable GTP-binding protein EngB of Yersinia pestis bv. Antiqua (strain Angola).